The primary structure comprises 957 residues: MSLVSQNSRRRRRRVAKATAHNSSWGEMQAPNAPGLPADVPGSDVPQGPSDSQILQGLCASEGPSTSVLPTSAEGPSTFVPPTISEASSASGQPTISEGPGTSVLPTPSEGLSTSGPPTISKGLCTSVTLAASEGRNTSRPPTSSEEPSTSVPPTASEVPSTSLPPTPGEGTSTSVPPTAYEGPSTSVVPTPDEGPSTSVLPTPGEGPGTSVPLAATEGLSTSVQATPDEGPSTSVPPTATEGLSTPVPPTRDEGPSTSVPATPGEGPSTSVLPAASDGQSISLVPTRGKGSSTSVPPTATEGLSTSVQPTAGEGSSTSVPPTPGGGLSTSVPPTATEELSTSVPPTPGEGPSTSVLPIPGEGLSTSVPPTASDGSDTSVPPTPGEGASTLVQPTAPDGPGSSVLPNPGEGPSTLFSSSASVDRNPSKCSLVLPSPRVTKASVDSDSEGPKGAEGPIEFEVLRDCESPNSISIMGLNTSRVAITLKPQDPMEQNVAELLQFLLVKDQSKYPIRESEMREYIVKEYRNQFPEILRRAAAHLECIFRFELRELDPEAHTYILLNKLGPVPFEGLEESPNGPKMGLLMMILGQIFLNGNQAKEAEIWEMLWRMGVQRERRLSIFGNPKRLLSVEFVWQRYLDYRPVTDCKPVEYEFFWGPRSHLETTKMKILKFMAKIYNKDPMDWPEKYNEALEEDAARAFAEGWQALPHFRRPFFEEAAAEVPSPDSEVSSYSSKYAPHSWPESRLESKARKLVQLFLLMDSTKLPIPKKGILYYIGRECSKVFPDLLNRAARTLNHVYGTELVVLDPRNHSYTLYNRREMEETEEIVDSPNRPGNNFLMQVLSFIFIMGNHARESAVWAFLRGLGVQAGRKHVITCRYLSQRYIDSLRVPDSDPVQYEFVWGPRARLETSKMKALRYVARIHRKEPQDWPQQYREAMEDEANRADVGHRQIFVHNFR.

The segment at 1–455 (MSLVSQNSRR…DSEGPKGAEG (455 aa)) is disordered. Polar residues-rich tracts occupy residues 85–96 (SEASSASGQPTI) and 104–130 (VLPTPSEGLSTSGPPTISKGLCTSVTL). Residues 138 to 162 (TSRPPTSSEEPSTSVPPTASEVPST) show a composition bias toward low complexity. 5 stretches are compositionally biased toward polar residues: residues 219–244 (GLSTSVQATPDEGPSTSVPPTATEGL), 268–320 (PSTS…STSV), 329–344 (STSVPPTATEELSTSV), 364–380 (LSTSVPPTASDGSDTSV), and 414–428 (TLFSSSASVDRNPSK). 2 MAGE domains span residues 491-690 (MEQN…YNEA) and 745-936 (LESK…YREA). The interval 743–957 (SRLESKARKL…HRQIFVHNFR (215 aa)) is interaction with DTNA.

Interacts with DTNA. Interacts with TRIM28.

It localises to the cytoplasm. It is found in the perinuclear region. The protein localises to the nucleus. The protein resides in the cell membrane. Its function is as follows. May enhance ubiquitin ligase activity of RING-type zinc finger-containing E3 ubiquitin-protein ligases. Proposed to act through recruitment and/or stabilization of the Ubl-conjugating enzyme (E2) at the E3:substrate complex. In Homo sapiens (Human), this protein is Melanoma-associated antigen E1 (MAGEE1).